A 619-amino-acid chain; its full sequence is Probable Xaa-Pro aminopeptidase P (619 aa).

Asp-416, Asp-427, Glu-525, and Glu-539 together coordinate Mn(2+).

Belongs to the peptidase M24B family. Mn(2+) serves as cofactor.

It catalyses the reaction Release of any N-terminal amino acid, including proline, that is linked to proline, even from a dipeptide or tripeptide.. Catalyzes the removal of a penultimate prolyl residue from the N-termini of peptides. The protein is Probable Xaa-Pro aminopeptidase P (AMPP) of Tuber melanosporum (strain Mel28) (Perigord black truffle).